The following is a 254-amino-acid chain: Emerin (254 aa).

Met1 bears the N-acetylmethionine mark. One can recognise an LEM domain in the interval 1-45; that stretch reads MDNYADLSDTELTTLLRRYNIPHGPVVGSTRRLYEKKIFEYETQR. Phosphoserine occurs at positions 8 and 29. The tract at residues 46–222 is interaction with F-actin; it reads RRLSPPSSSA…PGAGLGQDRQ (177 aa). At Ser49 the chain carries Phosphoserine; by PKA. Residues Ser54, Ser60, Ser87, Ser98, Ser141, Ser142, and Ser143 each carry the phosphoserine modification. Tyr161 is modified (phosphotyrosine). The interaction with CTNNB1 stretch occupies residues 168–186; it reads RPVSASRSSLDLSYYPTSS. Residues Ser171, Ser173, and Ser175 each carry the phosphoserine modification. Residues 223–243 traverse the membrane as a helical segment; it reads VPLWGQLLLFLVFVIVLFFIY.

As to quaternary structure, interacts with lamins A and C, BANF1, GMCL, BCLAF1 and YTHDC1/YT521. Interacts with TMEM43; the interaction retains emerin in the nuclear inner membrane. Interacts with SUN1 and SUN2. Interacts with ACTB, SPTAN1, F-actin, CTNNB1 and beta-tubulin. Interacts with TMEM201. Interacts with NEMP1. Found in four different phosphorylated forms, three of which appear to be associated with the cell cycle. In terms of tissue distribution, skeletal muscle, heart, colon, testis, ovary and pancreas.

Its subcellular location is the nucleus inner membrane. The protein localises to the nucleus outer membrane. Functionally, stabilizes and promotes the formation of a nuclear actin cortical network. Stimulates actin polymerization in vitro by binding and stabilizing the pointed end of growing filaments. Inhibits beta-catenin activity by preventing its accumulation in the nucleus. Acts by influencing the nuclear accumulation of beta-catenin through a CRM1-dependent export pathway. Links centrosomes to the nuclear envelope via a microtubule association. Required for proper localization of non-farnesylated prelamin-A/C. Together with NEMP1, contributes to nuclear envelope stiffness in germ cells. EMD and BAF are cooperative cofactors of HIV-1 infection. Association of EMD with the viral DNA requires the presence of BAF and viral integrase. The association of viral DNA with chromatin requires the presence of BAF and EMD. The protein is Emerin (EMD) of Homo sapiens (Human).